Consider the following 811-residue polypeptide: Probable phosphoketolase (811 aa).

It belongs to the XFP family. It depends on thiamine diphosphate as a cofactor.

This chain is Probable phosphoketolase, found in Methylococcus capsulatus (strain ATCC 33009 / NCIMB 11132 / Bath).